Here is a 151-residue protein sequence, read N- to C-terminus: Deoxyuridine 5'-triphosphate nucleotidohydrolase (151 aa).

Substrate-binding positions include 70 to 72 (RSG), Asn-83, 87 to 89 (LID), and Met-97.

The protein belongs to the dUTPase family. Requires Mg(2+) as cofactor.

It carries out the reaction dUTP + H2O = dUMP + diphosphate + H(+). Its pathway is pyrimidine metabolism; dUMP biosynthesis; dUMP from dCTP (dUTP route): step 2/2. This enzyme is involved in nucleotide metabolism: it produces dUMP, the immediate precursor of thymidine nucleotides and it decreases the intracellular concentration of dUTP so that uracil cannot be incorporated into DNA. This chain is Deoxyuridine 5'-triphosphate nucleotidohydrolase, found in Pseudomonas fluorescens (strain ATCC BAA-477 / NRRL B-23932 / Pf-5).